Here is a 453-residue protein sequence, read N- to C-terminus: Bifunctional protein GlmU (453 aa).

The interval 1–225 (MNIVILAAGT…GWETLGVNSK (225 aa)) is pyrophosphorylase. Residues 6–9 (LAAG), Lys-20, Gln-71, 76–77 (GT), 98–100 (YGD), Gly-135, Glu-150, Asn-165, and Asn-223 contribute to the UDP-N-acetyl-alpha-D-glucosamine site. Asp-100 serves as a coordination point for Mg(2+). Mg(2+) is bound at residue Asn-223. The tract at residues 226–246 (AQLAELERIHQRNLADALLAA) is linker. The tract at residues 247–453 (GVTLADPARI…GYVRPVKKKS (207 aa)) is N-acetyltransferase. Residues Arg-329 and Lys-347 each contribute to the UDP-N-acetyl-alpha-D-glucosamine site. The active-site Proton acceptor is His-359. Residues Tyr-362 and Asn-373 each contribute to the UDP-N-acetyl-alpha-D-glucosamine site. Residues Ala-376, 382-383 (NY), Ser-401, and Ala-419 each bind acetyl-CoA.

The protein in the N-terminal section; belongs to the N-acetylglucosamine-1-phosphate uridyltransferase family. In the C-terminal section; belongs to the transferase hexapeptide repeat family. As to quaternary structure, homotrimer. The cofactor is Mg(2+).

The protein resides in the cytoplasm. It carries out the reaction alpha-D-glucosamine 1-phosphate + acetyl-CoA = N-acetyl-alpha-D-glucosamine 1-phosphate + CoA + H(+). The catalysed reaction is N-acetyl-alpha-D-glucosamine 1-phosphate + UTP + H(+) = UDP-N-acetyl-alpha-D-glucosamine + diphosphate. Its pathway is nucleotide-sugar biosynthesis; UDP-N-acetyl-alpha-D-glucosamine biosynthesis; N-acetyl-alpha-D-glucosamine 1-phosphate from alpha-D-glucosamine 6-phosphate (route II): step 2/2. The protein operates within nucleotide-sugar biosynthesis; UDP-N-acetyl-alpha-D-glucosamine biosynthesis; UDP-N-acetyl-alpha-D-glucosamine from N-acetyl-alpha-D-glucosamine 1-phosphate: step 1/1. It participates in bacterial outer membrane biogenesis; LPS lipid A biosynthesis. Catalyzes the last two sequential reactions in the de novo biosynthetic pathway for UDP-N-acetylglucosamine (UDP-GlcNAc). The C-terminal domain catalyzes the transfer of acetyl group from acetyl coenzyme A to glucosamine-1-phosphate (GlcN-1-P) to produce N-acetylglucosamine-1-phosphate (GlcNAc-1-P), which is converted into UDP-GlcNAc by the transfer of uridine 5-monophosphate (from uridine 5-triphosphate), a reaction catalyzed by the N-terminal domain. The polypeptide is Bifunctional protein GlmU (Burkholderia pseudomallei (strain K96243)).